The sequence spans 636 residues: Chaperone protein HtpG (636 aa).

The a; substrate-binding stretch occupies residues 1-342 (MSGETLEFQA…AHDLSLNISR (342 aa)). The tract at residues 343-558 (ELLQQDRQIQ…AHDVTPTLEK (216 aa)) is b. The segment at 559-636 (MYRAMGHEVP…ILAERLARTL (78 aa)) is c.

It belongs to the heat shock protein 90 family. In terms of assembly, homodimer.

The protein localises to the cytoplasm. Its function is as follows. Molecular chaperone. Has ATPase activity. The polypeptide is Chaperone protein HtpG (Salinispora arenicola (strain CNS-205)).